Here is an 89-residue protein sequence, read N- to C-terminus: Small ribosomal subunit protein uS15 (89 aa).

This sequence belongs to the universal ribosomal protein uS15 family. As to quaternary structure, part of the 30S ribosomal subunit. Forms a bridge to the 50S subunit in the 70S ribosome, contacting the 23S rRNA.

In terms of biological role, one of the primary rRNA binding proteins, it binds directly to 16S rRNA where it helps nucleate assembly of the platform of the 30S subunit by binding and bridging several RNA helices of the 16S rRNA. Its function is as follows. Forms an intersubunit bridge (bridge B4) with the 23S rRNA of the 50S subunit in the ribosome. This is Small ribosomal subunit protein uS15 from Rhizorhabdus wittichii (strain DSM 6014 / CCUG 31198 / JCM 15750 / NBRC 105917 / EY 4224 / RW1) (Sphingomonas wittichii).